The following is a 941-amino-acid chain: Ankyrin repeat and MYND domain-containing protein 1 (941 aa).

MORN repeat units lie at residues 2 to 24 (YQGEFGLNMKLGYGKFSWPTGES), 25 to 47 (YHGQFYRDHCHGLGTYMWPDGSS), and 70 to 92 (FQGLYKADQRFGPGVETYPDGSQ). 7 ANK repeats span residues 292 to 321 (KGYTVLAAAATHCHNDIVNLLLDCGADVNK), 513 to 542 (MRRMALSMIERRKRWRTIKLLLRRGADPNL), 545 to 574 (VPMQVLFLAVKAGDVDGVRLLLEHGARTDI), 581 to 613 (STLTPLHIAAALPGEEGVQIVELLLHAITDVDA), 657 to 691 (GGRTALHMACEREDDNKCARDIVRLLLSHGANPNL), 694 to 723 (SGHSPLSLSIASGNELVVKELLTQGADPNL), and 737 to 766 (CDLTYEHQRNMDSKLALIDRLISHGADILK). The Zn(2+) site is built by Cys-880, Cys-883, Cys-894, Cys-897, Cys-903, Cys-907, His-916, and Cys-920. The segment at 880–920 (CYQCGRSIGVRLLPCPRCYGILTCSKYCKTKAWTEFHKKDC) adopts an MYND-type zinc-finger fold.

The polypeptide is Ankyrin repeat and MYND domain-containing protein 1 (ANKMY1) (Homo sapiens (Human)).